Consider the following 396-residue polypeptide: Argininosuccinate synthase (396 aa).

9 to 17 (AYSGGLDTS) provides a ligand contact to ATP. Residue Tyr-85 participates in L-citrulline binding. An ATP-binding site is contributed by Gly-115. L-aspartate contacts are provided by Thr-117, Asn-121, and Asp-122. Asn-121 serves as a coordination point for L-citrulline. 4 residues coordinate L-citrulline: Arg-125, Ser-173, Glu-258, and Tyr-270.

It belongs to the argininosuccinate synthase family. Type 1 subfamily. In terms of assembly, homotetramer.

It is found in the cytoplasm. It catalyses the reaction L-citrulline + L-aspartate + ATP = 2-(N(omega)-L-arginino)succinate + AMP + diphosphate + H(+). It participates in amino-acid biosynthesis; L-arginine biosynthesis; L-arginine from L-ornithine and carbamoyl phosphate: step 2/3. The polypeptide is Argininosuccinate synthase (Streptococcus agalactiae serotype Ia (strain ATCC 27591 / A909 / CDC SS700)).